The following is a 431-amino-acid chain: Glutamate-1-semialdehyde 2,1-aminomutase (431 aa).

Lys-267 is modified (N6-(pyridoxal phosphate)lysine).

This sequence belongs to the class-III pyridoxal-phosphate-dependent aminotransferase family. HemL subfamily. In terms of assembly, homodimer. The cofactor is pyridoxal 5'-phosphate.

Its subcellular location is the cytoplasm. It catalyses the reaction (S)-4-amino-5-oxopentanoate = 5-aminolevulinate. Its pathway is porphyrin-containing compound metabolism; protoporphyrin-IX biosynthesis; 5-aminolevulinate from L-glutamyl-tRNA(Glu): step 2/2. This is Glutamate-1-semialdehyde 2,1-aminomutase from Syntrophomonas wolfei subsp. wolfei (strain DSM 2245B / Goettingen).